A 503-amino-acid polypeptide reads, in one-letter code: Geissoschizine oxidase (503 aa).

A helical transmembrane segment spans residues 7–27; the sequence is FSSPSFFFLLPFLFLLIKPLI. Cys441 provides a ligand contact to heme.

This sequence belongs to the cytochrome P450 family. Heme serves as cofactor.

It localises to the membrane. The catalysed reaction is (19E)-geissoschizine + reduced [NADPH--hemoprotein reductase] + O2 = akuammicine + formate + oxidized [NADPH--hemoprotein reductase] + H2O + H(+). It carries out the reaction (19E)-geissoschizine + reduced [NADPH--hemoprotein reductase] + O2 = 3,17-didehydrostemmadenine + oxidized [NADPH--hemoprotein reductase] + 2 H2O. It catalyses the reaction 3,17-didehydrostemmadenine = 17-dehydropreakuammicine. It participates in alkaloid biosynthesis. Functionally, monooxygenase involved in the biosynthesis of curare monoterpene indole alkaloids (MIAs), natural products such as diaboline, a pharmacologically active compound used to regulate blood pressure. Curare alkaloids act as animal glycine receptor antagonists. Catalyzes the conversion of geissoschizine to dehydropreakuammicine by cyclization, which is spontaneously converted into akuammicine by aromatization. The protein is Geissoschizine oxidase of Strychnos sp.